The following is a 309-amino-acid chain: Dihydroorotate dehydrogenase B (NAD(+)), catalytic subunit (309 aa).

FMN-binding positions include serine 21 and 45–46; that span reads KA. Residues lysine 45 and 69-73 contribute to the substrate site; that span reads NAIGL. 2 residues coordinate FMN: asparagine 99 and asparagine 127. Asparagine 127 is a binding site for substrate. Cysteine 130 functions as the Nucleophile in the catalytic mechanism. Residues lysine 165 and isoleucine 191 each contribute to the FMN site. 192–193 is a substrate binding site; it reads NT. Residues glycine 217, 243-244, and 265-266 each bind FMN; these read GG and GT.

This sequence belongs to the dihydroorotate dehydrogenase family. Type 1 subfamily. As to quaternary structure, heterotetramer of 2 PyrK and 2 PyrD type B subunits. FMN serves as cofactor.

It is found in the cytoplasm. It catalyses the reaction (S)-dihydroorotate + NAD(+) = orotate + NADH + H(+). Its pathway is pyrimidine metabolism; UMP biosynthesis via de novo pathway; orotate from (S)-dihydroorotate (NAD(+) route): step 1/1. Its function is as follows. Catalyzes the conversion of dihydroorotate to orotate with NAD(+) as electron acceptor. This is Dihydroorotate dehydrogenase B (NAD(+)), catalytic subunit (pyrD) from Exiguobacterium sibiricum (strain DSM 17290 / CCUG 55495 / CIP 109462 / JCM 13490 / 255-15).